The chain runs to 416 residues: CinA-like protein (416 aa).

It belongs to the CinA family.

The chain is CinA-like protein from Syntrophomonas wolfei subsp. wolfei (strain DSM 2245B / Goettingen).